A 284-amino-acid chain; its full sequence is 2-dehydro-3-deoxyphosphooctonate aldolase (284 aa).

This sequence belongs to the KdsA family.

It localises to the cytoplasm. The catalysed reaction is D-arabinose 5-phosphate + phosphoenolpyruvate + H2O = 3-deoxy-alpha-D-manno-2-octulosonate-8-phosphate + phosphate. The protein operates within carbohydrate biosynthesis; 3-deoxy-D-manno-octulosonate biosynthesis; 3-deoxy-D-manno-octulosonate from D-ribulose 5-phosphate: step 2/3. It functions in the pathway bacterial outer membrane biogenesis; lipopolysaccharide biosynthesis. The polypeptide is 2-dehydro-3-deoxyphosphooctonate aldolase (Salmonella paratyphi A (strain ATCC 9150 / SARB42)).